The sequence spans 693 residues: Elongation factor G (693 aa).

In terms of domain architecture, tr-type G spans 8-282 (KNTRNIGIMA…AVIDYLPSPL (275 aa)). GTP contacts are provided by residues 17–24 (AHIDAGKT), 81–85 (DTPGH), and 135–138 (NKMD).

It belongs to the TRAFAC class translation factor GTPase superfamily. Classic translation factor GTPase family. EF-G/EF-2 subfamily.

Its subcellular location is the cytoplasm. Its function is as follows. Catalyzes the GTP-dependent ribosomal translocation step during translation elongation. During this step, the ribosome changes from the pre-translocational (PRE) to the post-translocational (POST) state as the newly formed A-site-bound peptidyl-tRNA and P-site-bound deacylated tRNA move to the P and E sites, respectively. Catalyzes the coordinated movement of the two tRNA molecules, the mRNA and conformational changes in the ribosome. This is Elongation factor G from Staphylococcus intermedius.